Reading from the N-terminus, the 305-residue chain is MSKKLTFQEIILTLQQFWNDQGCMLMQAYDNEKGAGTMSPYTFLRAIGPEPWNAAYVEPSRRPADGRYGENPNRLYQHHQFQVVMKPSPSNIQELYLESLEKLGINPLEHDIRFVEDNWENPSTGSAGLGWEVWLDGMEITQFTYFQQVGGLATGPVTAEVTYGLERLASYIQEVDSIYDIEWADGVKYGEIFIQPEYEHSKYSFEISDQEMLLENFDKFEKEAGRALEEGLVHPAYDYVLKCSHTFNLLDARGAVSVTERAGYIARIRNLARVVAKTFVAERKRLGYPLLDEETRVKLLAEDAE.

This sequence belongs to the class-II aminoacyl-tRNA synthetase family. In terms of assembly, tetramer of two alpha and two beta subunits.

It localises to the cytoplasm. The catalysed reaction is tRNA(Gly) + glycine + ATP = glycyl-tRNA(Gly) + AMP + diphosphate. The polypeptide is Glycine--tRNA ligase alpha subunit (Streptococcus pneumoniae (strain ATCC BAA-255 / R6)).